Consider the following 1190-residue polypeptide: Tight junction protein 2 (1190 aa).

S16 bears the Phosphoserine mark. Residues 33-120 enclose the PDZ 1 domain; it reads TVTLQKDSKR…VAAIVVKRPR (88 aa). A phosphoserine mark is found at S130, S150, S153, S163, S168, S170, S174, S200, S220, S232, S244, S266, S325, S398, S400, S406, S415, S424, S430, and S431. The tract at residues 152–306 is disordered; the sequence is RSGYSERSRL…PEPRGRPGPI (155 aa). The span at 169–291 shows a compositional bias: basic and acidic residues; the sequence is RSWEDSPERG…PRSRSREHPH (123 aa). Residues 307–385 form the PDZ 2 domain; the sequence is GVLLMKSRAN…KLQLVVLRDS (79 aa). The tract at residues 408–506 is disordered; it reads IESNRSFSPE…RPSPEDEAIY (99 aa). The span at 415-446 shows a compositional bias: basic and acidic residues; it reads SPEERRHQYSDYDYHSSSEKLKERPSSREDTP. A Phosphothreonine modification is found at T455. Residue S499 is modified to Phosphoserine. One can recognise a PDZ 3 domain in the interval 509–590; that stretch reads NTKMVRFKKG…GEMVTILAQS (82 aa). Y574 is subject to Phosphotyrosine. The SH3 domain maps to 604 to 669; the sequence is GDSFFIRSHF…PNKSRAEQMA (66 aa). A Guanylate kinase-like domain is found at 678 to 876; that stretch reads NAGDRADFWR…WFGSLKDTIQ (199 aa). Phosphoserine occurs at positions 702 and 902. Phosphothreonine is present on T905. A phosphoserine mark is found at S913 and S920. Disordered stretches follow at residues 920 to 1079 and 1105 to 1190; these read SDFE…KSVL and NARI…DTEL. A phosphothreonine mark is found at T925 and T933. The segment covering 956 to 967 has biased composition (basic and acidic residues); it reads VQHEESIRKPSP. 6 positions are modified to phosphoserine: S966, S978, S986, S1006, S1067, and S1068. Over residues 994 to 1014 the composition is skewed to basic and acidic residues; sequence EPPKAKTQNKEESYDFSKSYE. Acidic residues predominate over residues 1060–1072; that stretch reads EGEEVGESSEEQD. Position 1118 is a phosphotyrosine (Y1118). T1131 bears the Phosphothreonine mark. Residues S1147 and S1159 each carry the phosphoserine modification. Basic and acidic residues predominate over residues 1166 to 1175; that stretch reads YRQQLSEHSK. The interaction with SCRIB stretch occupies residues 1188-1190; it reads TEL.

The protein belongs to the MAGUK family. In terms of assembly, homodimer. Interacts (via PDZ2 domain) with TJP1/ZO1 (via PDZ2 domain). Interacts with OCLN. Interacts with UBN1. Interacts with SAFB in the nucleus. Interacts with SCRIB. Interacts with USP53 (via the C-terminal region). Interacts with claudins, including CLDN1, CLDN2, CLDN3, CLDN5 and CLDN7. Interacts with CLDN18. Interacts (via N-terminus) with CTNNA1. This protein is found in epithelial cell junctions. Isoform A1 is abundant in the heart and brain. Detected in brain and skeletal muscle. It is present almost exclusively in normal tissues. Isoform C1 is expressed at high level in the kidney, pancreas, heart and placenta. Not detected in brain and skeletal muscle. Found in normal as well as in most neoplastic tissues.

It localises to the cell junction. It is found in the adherens junction. The protein localises to the cell membrane. The protein resides in the tight junction. Its subcellular location is the nucleus. Plays a role in tight junctions and adherens junctions. Acts as a positive regulator of RANKL-induced osteoclast differentiation, potentially via mediating downstream transcriptional activity. The polypeptide is Tight junction protein 2 (Homo sapiens (Human)).